We begin with the raw amino-acid sequence, 494 residues long: Glycerol kinase (494 aa).

An ADP-binding site is contributed by Thr-12. 3 residues coordinate ATP: Thr-12, Thr-13, and Ser-14. Position 12 (Thr-12) interacts with sn-glycerol 3-phosphate. Position 16 (Arg-16) interacts with ADP. Positions 82, 83, 134, and 244 each coordinate sn-glycerol 3-phosphate. Glycerol is bound by residues Arg-82, Glu-83, Tyr-134, Asp-244, and Gln-245. ADP-binding residues include Thr-266 and Gly-309. The ATP site is built by Thr-266, Gly-309, Gln-313, and Gly-410. ADP contacts are provided by Gly-410 and Asn-414.

This sequence belongs to the FGGY kinase family. In terms of assembly, homotetramer and homodimer (in equilibrium).

The catalysed reaction is glycerol + ATP = sn-glycerol 3-phosphate + ADP + H(+). The protein operates within polyol metabolism; glycerol degradation via glycerol kinase pathway; sn-glycerol 3-phosphate from glycerol: step 1/1. With respect to regulation, activated by phosphorylation and inhibited by fructose 1,6-bisphosphate (FBP). Its function is as follows. Key enzyme in the regulation of glycerol uptake and metabolism. Catalyzes the phosphorylation of glycerol to yield sn-glycerol 3-phosphate. In Desulfitobacterium hafniense (strain DSM 10664 / DCB-2), this protein is Glycerol kinase.